Consider the following 194-residue polypeptide: ECF RNA polymerase sigma factor SigX (194 aa).

Residues 32–45 carry the Polymerase core binding motif; that stretch reads DLLQEVYIRVLNSY. A DNA-binding region (H-T-H motif) is located at residues 136–155; it reads IQETAKALRFSESKVKTTQH.

The protein belongs to the sigma-70 factor family. ECF subfamily. In terms of assembly, interacts transiently with the RNAP core.

The protein resides in the cell membrane. Its function is as follows. Sigma factors are initiation factors that promote the attachment of RNA polymerase (RNAP) to specific initiation sites and are then released. May be involved in the regulation of iron metabolism. Associates with RNAP core during early growth phases, association decreases as cells age. The sequence is that of ECF RNA polymerase sigma factor SigX (sigX) from Bacillus subtilis (strain 168).